A 139-amino-acid chain; its full sequence is mRNA stability protein mug134 (139 aa).

A disordered region spans residues 83–139 (IGKEIPSPDTIPHRVVSAGSPNKEPSLHTKRPSESSPSGASSRRESVTRHDLESNEN). Basic and acidic residues predominate over residues 124–139 (SRRESVTRHDLESNEN).

Belongs to the endosulfine family.

The protein resides in the nucleus. Its subcellular location is the cytoplasm. Its function is as follows. Plays an essential role in initiation of the G0 program by preventing the degradation of specific nutrient-regulated mRNAs via the 5'-3' mRNA decay pathway. The sequence is that of mRNA stability protein mug134 (mug134) from Schizosaccharomyces pombe (strain 972 / ATCC 24843) (Fission yeast).